The sequence spans 730 residues: Neuroligin-like protein glit-1 (730 aa).

The first 18 residues, 1 to 18 (MFTGTIFNSLFTLPLVIS), serve as a signal peptide directing secretion. The Extracellular segment spans residues 19–663 (QFVPPPTRPV…EIMVFKWITG (645 aa)). 7 N-linked (GlcNAc...) asparagine glycosylation sites follow: Asn-103, Asn-320, Asn-445, Asn-512, Asn-557, Asn-564, and Asn-604. A helical membrane pass occupies residues 664–684 (VNVIIIALLIVLAGAFGYMVW). The Cytoplasmic segment spans residues 685–730 (GNKEDEEAAYKAENHQLVEYRDTGHSVSDATISSRTRSPRSRITNL).

It belongs to the type-B carboxylesterase/lipase family. In terms of tissue distribution, expressed in the pharynx, intestine, and in several cells in the head including dopaminergic neurons.

It localises to the cell membrane. Functionally, probable neuronal cell surface protein thought to be involved in cell-cell-interactions. Confers protection against oxidative stress. Plays a role in protecting dopaminergic neurons against oxidative stress-induced neurodegeneration. The chain is Neuroligin-like protein glit-1 from Caenorhabditis elegans.